The primary structure comprises 225 residues: Ribose-5-phosphate isomerase A (225 aa).

Residues 26 to 29 (TGST), 82 to 85 (DGAD), and 95 to 98 (KGGG) contribute to the substrate site. Glutamate 104 (proton acceptor) is an active-site residue. Lysine 122 contributes to the substrate binding site.

The protein belongs to the ribose 5-phosphate isomerase family. In terms of assembly, homodimer.

The enzyme catalyses aldehydo-D-ribose 5-phosphate = D-ribulose 5-phosphate. It participates in carbohydrate degradation; pentose phosphate pathway; D-ribose 5-phosphate from D-ribulose 5-phosphate (non-oxidative stage): step 1/1. Catalyzes the reversible conversion of ribose-5-phosphate to ribulose 5-phosphate. The protein is Ribose-5-phosphate isomerase A of Streptococcus mutans serotype c (strain ATCC 700610 / UA159).